The following is a 37-amino-acid chain: Large ribosomal subunit protein bL36B (37 aa).

It belongs to the bacterial ribosomal protein bL36 family.

The sequence is that of Large ribosomal subunit protein bL36B from Paenarthrobacter aurescens (strain TC1).